The sequence spans 640 residues: Asparagine synthetase domain-containing protein 1 (640 aa).

Cysteine 2 serves as the catalytic For GATase activity. Positions 2–184 (CGICCAVSFS…ASGIFRIDLK (183 aa)) constitute a Glutamine amidotransferase type-2 domain. An Asparagine synthetase domain is found at 286 to 602 (QFIGVLSTAV…GLTASALLPK (317 aa)).

The sequence is that of Asparagine synthetase domain-containing protein 1 (ASNSD1) from Bos taurus (Bovine).